A 487-amino-acid chain; its full sequence is Uronate isomerase (487 aa).

Belongs to the metallo-dependent hydrolases superfamily. Uronate isomerase family.

The catalysed reaction is D-glucuronate = D-fructuronate. The enzyme catalyses aldehydo-D-galacturonate = keto-D-tagaturonate. It participates in carbohydrate metabolism; pentose and glucuronate interconversion. This chain is Uronate isomerase, found in Caulobacter vibrioides (strain ATCC 19089 / CIP 103742 / CB 15) (Caulobacter crescentus).